A 403-amino-acid polypeptide reads, in one-letter code: Blue light- and temperature-regulated antirepressor BluF (403 aa).

In terms of domain architecture, BLUF spans 2 to 93; it reads LTTLIYRSHI…ARRFGKAGME (92 aa). The interval 98–144 is joining helix; sequence RLHERDDVLQAVFDKGTSKFQLTYDDRALQFFRTFVLATEQSTYFEI. The EAL domain occupies 155–403; the sequence is DGSDKELDSC…IPSIAWPEKK (249 aa).

As to quaternary structure, monomer, it undergoes transient dimerization following photoexcitation or upon temperature reduction, with a relaxation time of about 2 minutes. The dimer may be the inactive state. Interacts with the N- and C-terminal domains of BluR. Can also interact with the C-terminal domain of MlrA. The cofactor is FAD.

Functionally, binds to and releases the BluR repressor from its bound DNA target in a blue light-dependent (470 nm) fashion. A shift to low temperature also triggers a BluF-mediated relief of repression by BluR, suggesting BluF may serve as a thermometer. Blue light may act to increase the affinity of BluF for BluR, allowing it to be released from its operator. The protein has a reversible photocycle, and undergoes structural changes, probably in the EAL domain, in response to light. This is Blue light- and temperature-regulated antirepressor BluF from Escherichia coli (strain K12).